The following is a 610-amino-acid chain: Calcium-dependent protein kinase 1 (610 aa).

A lipid anchor (N-myristoyl glycine) is attached at G2. A lipid anchor (S-palmitoyl cysteine) is attached at C5. Residues V17 to L133 are disordered. 2 stretches are compositionally biased toward basic and acidic residues: residues L47–Q56 and T70–A117. Residues K118–R127 are compositionally biased toward basic residues. One can recognise a Protein kinase domain in the interval Y150–V408. ATP contacts are provided by residues L156 to T164 and K179. The Proton acceptor role is filled by D274. S314 bears the Phosphoserine mark. The interval A414 to I444 is autoinhibitory domain. EF-hand domains lie at E451–N486, L487–I522, E523–E558, and D559–T592. Ca(2+) is bound by residues D464, D466, S468, Q470, E475, D500, D502, S504, T506, E511, D536, D538, S540, Y542, E547, D570, D572, D574, R576, and E581.

It belongs to the protein kinase superfamily. Ser/Thr protein kinase family. CDPK subfamily. In terms of assembly, interacts with 14-3-3 proteins.

It localises to the peroxisome membrane. The enzyme catalyses L-seryl-[protein] + ATP = O-phospho-L-seryl-[protein] + ADP + H(+). The catalysed reaction is L-threonyl-[protein] + ATP = O-phospho-L-threonyl-[protein] + ADP + H(+). Its activity is regulated as follows. Activated by calcium. Autophosphorylation may play an important role in the regulation of the kinase activity. Its function is as follows. May play a role in signal transduction pathways that involve calcium as a second messenger. Phosphorylates the Ca(2+)-ATPase ACA2 resulting in the inhibition of its calcium activation. The protein is Calcium-dependent protein kinase 1 (CPK1) of Arabidopsis thaliana (Mouse-ear cress).